The primary structure comprises 1181 residues: WD repeat-containing protein 35 (1181 aa).

6 WD repeats span residues 4–43, 61–100, 105–143, 147–185, 193–241, and 246–288; these read YLSK…VLKL, LSMN…VWML, WIEE…IVGS, NRIW…IYDN, MKLS…IMRH, and NPVL…IVQF.

In terms of assembly, component of the IFT complex A (IFT-A) complex. IFT-A complex is divided into a core subcomplex composed of IFT122:IFT140:WDR19 which is associated with TULP3 and a peripheral subcomplex composed of IFT43:WDR35:TTC21B. Interacts directy with IFT122, ITF43 and TTC21B. Interacts with IFT43. Interacts with CFAP61.

It localises to the cytoplasm. The protein localises to the cytoskeleton. It is found in the microtubule organizing center. The protein resides in the centrosome. Its subcellular location is the cilium axoneme. It localises to the cilium basal body. In terms of biological role, as a component of the IFT complex A (IFT-A), a complex required for retrograde ciliary transport and entry into cilia of G protein-coupled receptors (GPCRs), it is involved in ciliogenesis and ciliary protein trafficking. May promote CASP3 activation and TNF-stimulated apoptosis. The protein is WD repeat-containing protein 35 of Homo sapiens (Human).